Consider the following 779-residue polypeptide: Probable ATP-dependent RNA helicase DHX40 (779 aa).

Positions 1-53 are disordered; sequence MSRFPAVAGRAPRRQEEGERPVELQEERPSAVRIADREEKGCTSQEGGTTPTF. Positions 13-41 are enriched in basic and acidic residues; the sequence is RRQEEGERPVELQEERPSAVRIADREEKG. A compositionally biased stretch (polar residues) spans 42 to 53; that stretch reads CTSQEGGTTPTF. One can recognise a Helicase ATP-binding domain in the interval 63–231; it reads IQAVRDNSFL…FGNCPIFDIP (169 aa). 76–83 is an ATP binding site; that stretch reads GNTGSGKT. The DEAH box motif lies at 173 to 176; it reads DEAH. Residues 263–442 enclose the Helicase C-terminal domain; that stretch reads TMDIHLNEMA…SVVLTLKCLA (180 aa).

The protein belongs to the DEAD box helicase family. DEAH subfamily.

It carries out the reaction ATP + H2O = ADP + phosphate + H(+). In terms of biological role, probable ATP-dependent RNA helicase. This is Probable ATP-dependent RNA helicase DHX40 (Dhx40) from Rattus norvegicus (Rat).